Consider the following 342-residue polypeptide: Ribosomal RNA small subunit methyltransferase C (342 aa).

It belongs to the methyltransferase superfamily. RsmC family. As to quaternary structure, monomer.

It localises to the cytoplasm. The enzyme catalyses guanosine(1207) in 16S rRNA + S-adenosyl-L-methionine = N(2)-methylguanosine(1207) in 16S rRNA + S-adenosyl-L-homocysteine + H(+). Functionally, specifically methylates the guanine in position 1207 of 16S rRNA in the 30S particle. This Citrobacter koseri (strain ATCC BAA-895 / CDC 4225-83 / SGSC4696) protein is Ribosomal RNA small subunit methyltransferase C.